The chain runs to 715 residues: Fatty acid oxidation complex subunit alpha (715 aa).

Residues 1 to 194 form an enoyl-CoA hydratase region; sequence MHEQRAKPSA…RLGLVDDAVP (194 aa). The 3-hydroxyacyl-CoA dehydrogenase stretch occupies residues 310–715; that stretch reads HALHRIGILG…QGERFYPQGS (406 aa).

It in the N-terminal section; belongs to the enoyl-CoA hydratase/isomerase family. In the central section; belongs to the 3-hydroxyacyl-CoA dehydrogenase family. Heterotetramer of two alpha chains (FadJ) and two beta chains (FadI).

It localises to the cytoplasm. It catalyses the reaction a (3S)-3-hydroxyacyl-CoA = a (2E)-enoyl-CoA + H2O. The catalysed reaction is a 4-saturated-(3S)-3-hydroxyacyl-CoA = a (3E)-enoyl-CoA + H2O. The enzyme catalyses a (3S)-3-hydroxyacyl-CoA + NAD(+) = a 3-oxoacyl-CoA + NADH + H(+). It carries out the reaction (3S)-3-hydroxybutanoyl-CoA = (3R)-3-hydroxybutanoyl-CoA. The protein operates within lipid metabolism; fatty acid beta-oxidation. Functionally, catalyzes the formation of a hydroxyacyl-CoA by addition of water on enoyl-CoA. Also exhibits 3-hydroxyacyl-CoA epimerase and 3-hydroxyacyl-CoA dehydrogenase activities. This chain is Fatty acid oxidation complex subunit alpha, found in Serratia proteamaculans (strain 568).